The following is a 403-amino-acid chain: Acetate kinase (403 aa).

N7 contacts Mg(2+). K14 lines the ATP pocket. R90 contributes to the substrate binding site. D147 (proton donor/acceptor) is an active-site residue. ATP is bound by residues 207 to 211 (HIGNG), 283 to 285 (DMR), and 331 to 335 (GVGEN). E386 contacts Mg(2+).

Belongs to the acetokinase family. Homodimer. Mg(2+) is required as a cofactor. The cofactor is Mn(2+).

The protein resides in the cytoplasm. It catalyses the reaction acetate + ATP = acetyl phosphate + ADP. Its pathway is metabolic intermediate biosynthesis; acetyl-CoA biosynthesis; acetyl-CoA from acetate: step 1/2. In terms of biological role, catalyzes the formation of acetyl phosphate from acetate and ATP. Can also catalyze the reverse reaction. The sequence is that of Acetate kinase from Thermotoga sp. (strain RQ2).